Consider the following 543-residue polypeptide: Probable zinc transporter protein DDB_G0283629 (543 aa).

The interval 1 to 175 (MENFKNNELE…EESKPLNQLR (175 aa)) is disordered. The Cytoplasmic portion of the chain corresponds to 1–186 (MENFKNNELE…LDSKKKARYS (186 aa)). 2 stretches are compositionally biased toward low complexity: residues 11-26 (SSPIINKNNSSHSINN) and 41-55 (NNNNDNNNTITNSHI). Composition is skewed to basic and acidic residues over residues 56–66 (NNHDHKHNHEH) and 76–104 (HNHDHDHNHEEEYGHGNELEHNNDQEHNV). Residues 105-116 (GNKNLLTNNNNQ) show a composition bias toward low complexity. Positions 130–140 (EDGSSSGGGGG) are enriched in gly residues. The helical transmembrane segment at 187–207 (LILALTLTTIFMVGEIVGGYF) threads the bilayer. The Extracellular segment spans residues 208-216 (ANSLAIMTD). Residues 217–237 (AAHLLTDIGAMFLSLFAMWIS) form a helical membrane-spanning segment. The Cytoplasmic segment spans residues 238-251 (QHPPTSSMSFGFHR). Residues 252 to 272 (AEILGALVSVLMIWALTGVLV) form a helical membrane-spanning segment. Residues 273–289 (YEAIQRILYPPDAVDGK) lie on the Extracellular side of the membrane. A helical transmembrane segment spans residues 290 to 310 (IMFIIASCGLFINIIDAIILH). The Cytoplasmic segment spans residues 311 to 375 (WGSGGHGHSH…VRNINVHSAY (65 aa)). The interval 319–342 (SHGGGHGHSHGIGGGTQKKKSKKN) is disordered. The helical transmembrane segment at 376-396 (IHVLGDCFQSIGVMVASCIIW) threads the bilayer. Residues 397–402 (VHPHWK) are Extracellular-facing. Residues 403-423 (IADPITTLIFSVIVLGTTIKL) form a helical membrane-spanning segment. At 424-543 (LRESLGVLME…NDNLSSPPNQ (120 aa)) the chain is on the cytoplasmic side. Residues 516-543 (KCKDHSCPPPKPKKKKIKNDNLSSPPNQ) are disordered.

It belongs to the cation diffusion facilitator (CDF) transporter (TC 2.A.4) family. SLC30A subfamily.

It localises to the membrane. Functionally, may be involved in zinc transport from the cytoplasm to either intracellular organelles or extracellular spaces. In Dictyostelium discoideum (Social amoeba), this protein is Probable zinc transporter protein DDB_G0283629.